Here is a 132-residue protein sequence, read N- to C-terminus: Fibroblast growth factor 1 (132 aa).

Heparin is bound by residues N10 and K108–K120.

Belongs to the heparin-binding growth factors family.

It is found in the secreted. It localises to the cytoplasm. Its subcellular location is the cell cortex. The protein resides in the cytosol. The protein localises to the nucleus. Functionally, plays an important role in the regulation of cell survival, cell division, angiogenesis, cell differentiation and cell migration. Functions as a potent mitogen in vitro. Acts as a ligand for FGFR1 and integrins. Binds to FGFR1 in the presence of heparin leading to FGFR1 dimerization and activation via sequential autophosphorylation on tyrosine residues which act as docking sites for interacting proteins, leading to the activation of several signaling cascades. Binds to integrins. Its binding to integrins and subsequent ternary complex formation with integrins and FGFR1 are essential for FGF1 signaling. This Notophthalmus viridescens (Eastern newt) protein is Fibroblast growth factor 1 (fgf1).